The primary structure comprises 285 residues: NADH-dependent oxidoreductase ucdB (285 aa).

T87 provides a ligand contact to NAD(+). K156 is an active-site residue.

This sequence belongs to the HIBADH-related family. NP60 subfamily.

It participates in secondary metabolite biosynthesis. Nonribosomal peptide synthetase that mediates the biosynthesis of usterphenyllins and uscandidusins, p-terphenyl derivatives. Within the pathway, ucdB alone catalyzes both reduction and dehydration of atromentin to form a terphenyl triol intermediate. The pathway begin with the biosynthesis of 4-hydroxyphenylpyruvate (HPPA) from L-tyrosine, possibly by the aminotransferase ucdG. The nonribosomal peptide synthetase ucdA then condenses two HPPA units to produce atromentin. The key step in this pathway is the reduction and dehydration of atromentin to form a terphenyl triol intermediate, performed by the NAD-dependent dehydrogenase ucdB. Further O-methylation by the methyltransferase ucdC forms terphenyllin carrying two methoxy moieties at C-9 and C-12, and subsequent dihydroxylation at C-3 of ring A and C-15 of ring C by the flavin-dependent oxygenase ucdD leads to 3,15-dihydroxyterphenyllin. Prenylation by ucdE at position C-5 of ring A forms usterphenyllin B, and is followed by a second prenylation at position C-14 of ring C to form usterphenyllin A. The following furan ring formation that leads to uscandidusins A and B was proven to be an unexpected spontaneous non-enzymatic reaction. The protein is NADH-dependent oxidoreductase ucdB of Aspergillus ustus.